A 607-amino-acid chain; its full sequence is Glutamine--fructose-6-phosphate aminotransferase [isomerizing] (607 aa).

The active-site Nucleophile; for GATase activity is the C2. One can recognise a Glutamine amidotransferase type-2 domain in the interval 2-217; sequence CGIIGIIGRE…EGDWVVLTRE (216 aa). SIS domains follow at residues 283-422 and 455-597; these read PDFD…VKGQ and VATA…VDQP. The For Fru-6P isomerization activity role is filled by K602.

In terms of assembly, homodimer.

It is found in the cytoplasm. The enzyme catalyses D-fructose 6-phosphate + L-glutamine = D-glucosamine 6-phosphate + L-glutamate. Catalyzes the first step in hexosamine metabolism, converting fructose-6P into glucosamine-6P using glutamine as a nitrogen source. The polypeptide is Glutamine--fructose-6-phosphate aminotransferase [isomerizing] (Zymomonas mobilis subsp. mobilis (strain ATCC 31821 / ZM4 / CP4)).